The chain runs to 216 residues: Phosphoenolpyruvate guanylyltransferase (216 aa).

3 residues coordinate phosphoenolpyruvate: threonine 143, glycine 159, and serine 162.

It belongs to the CofC family.

The catalysed reaction is phosphoenolpyruvate + GTP + H(+) = enolpyruvoyl-2-diphospho-5'-guanosine + diphosphate. Its pathway is cofactor biosynthesis; coenzyme F420 biosynthesis. Functionally, guanylyltransferase that catalyzes the activation of phosphoenolpyruvate (PEP) as enolpyruvoyl-2-diphospho-5'-guanosine, via the condensation of PEP with GTP. It is involved in the biosynthesis of coenzyme F420, a hydride carrier cofactor. The chain is Phosphoenolpyruvate guanylyltransferase from Streptomyces scabiei (strain 87.22).